Consider the following 266-residue polypeptide: MTDAATGTTRADTFEDPLVIAGEKFHSRLIMGTGGAPSLHVLADALRASGTEMTTVAMRRVDPNAQGSVWDVLRETGVRPLPNTAGCFTAVDALRTARLGREALETNWVKLEVVADERTLLPDPVETLDAAERLVDEGFVVLAYTNDDPVLARRLAQVGCAAVMPLGAPIGSGMGIRNPHNIELIVEELDVPVILDAGIGTASDAALAMELGCDAVLLATAVTRAQDPVLMAHAMREAVSAGRRARLAGRIPIRRYAHASSPPREG.

Lysine 110 serves as the catalytic Schiff-base intermediate with DXP. Residues glycine 171, 197 to 198 (AG), and 219 to 220 (AT) each bind 1-deoxy-D-xylulose 5-phosphate.

This sequence belongs to the ThiG family. In terms of assembly, homotetramer. Forms heterodimers with either ThiH or ThiS.

It is found in the cytoplasm. The catalysed reaction is [ThiS sulfur-carrier protein]-C-terminal-Gly-aminoethanethioate + 2-iminoacetate + 1-deoxy-D-xylulose 5-phosphate = [ThiS sulfur-carrier protein]-C-terminal Gly-Gly + 2-[(2R,5Z)-2-carboxy-4-methylthiazol-5(2H)-ylidene]ethyl phosphate + 2 H2O + H(+). It participates in cofactor biosynthesis; thiamine diphosphate biosynthesis. In terms of biological role, catalyzes the rearrangement of 1-deoxy-D-xylulose 5-phosphate (DXP) to produce the thiazole phosphate moiety of thiamine. Sulfur is provided by the thiocarboxylate moiety of the carrier protein ThiS. In vitro, sulfur can be provided by H(2)S. In Thermobifida fusca (strain YX), this protein is Thiazole synthase.